Consider the following 388-residue polypeptide: Tryptophan synthase beta chain 1 (388 aa).

Lysine 82 carries the N6-(pyridoxal phosphate)lysine modification.

Belongs to the TrpB family. Tetramer of two alpha and two beta chains. The cofactor is pyridoxal 5'-phosphate.

The catalysed reaction is (1S,2R)-1-C-(indol-3-yl)glycerol 3-phosphate + L-serine = D-glyceraldehyde 3-phosphate + L-tryptophan + H2O. The protein operates within amino-acid biosynthesis; L-tryptophan biosynthesis; L-tryptophan from chorismate: step 5/5. Functionally, the beta subunit is responsible for the synthesis of L-tryptophan from indole and L-serine. This is Tryptophan synthase beta chain 1 (trpB1) from Pyrococcus abyssi (strain GE5 / Orsay).